The following is a 570-amino-acid chain: CRISPR-associated protein Cas8a1/Csx13 (570 aa).

2 disordered regions span residues 1–23 (MACM…AGLR) and 551–570 (GGEA…SEQS).

This sequence belongs to the CRISPR-associated protein Cas8a1/Csx13 family. Myxan subtype subfamily.

Functionally, CRISPR (clustered regularly interspaced short palindromic repeat) is an adaptive immune system that provides protection against mobile genetic elements (viruses, transposable elements and conjugative plasmids). CRISPR clusters contain spacers, sequences complementary to antecedent mobile elements, and target invading nucleic acids. CRISPR clusters are transcribed and processed into CRISPR RNA (crRNA). Its function is as follows. Functions in an unknown fashion to stimulate transcription of fruA independently of the intracellular A- and E-developmental signals. This Myxococcus xanthus (strain DK1622) protein is CRISPR-associated protein Cas8a1/Csx13 (devT).